The chain runs to 336 residues: tRNA(Ile)-lysidine synthase (336 aa).

Residue serine 40–serine 45 participates in ATP binding.

This sequence belongs to the tRNA(Ile)-lysidine synthase family.

The protein resides in the cytoplasm. It carries out the reaction cytidine(34) in tRNA(Ile2) + L-lysine + ATP = lysidine(34) in tRNA(Ile2) + AMP + diphosphate + H(+). Functionally, ligates lysine onto the cytidine present at position 34 of the AUA codon-specific tRNA(Ile) that contains the anticodon CAU, in an ATP-dependent manner. Cytidine is converted to lysidine, thus changing the amino acid specificity of the tRNA from methionine to isoleucine. The polypeptide is tRNA(Ile)-lysidine synthase (Prochlorococcus marinus subsp. pastoris (strain CCMP1986 / NIES-2087 / MED4)).